A 456-amino-acid chain; its full sequence is Glycine--tRNA ligase (456 aa).

Arg-98 and Glu-168 together coordinate substrate. ATP-binding positions include 200-202 (RNE), 210-215 (FRTREF), 285-286 (EL), and 329-332 (GVER). A substrate-binding site is contributed by 215–219 (FEQME). A substrate-binding site is contributed by 325–329 (EPSVG).

It belongs to the class-II aminoacyl-tRNA synthetase family. Homodimer.

The protein resides in the cytoplasm. It carries out the reaction tRNA(Gly) + glycine + ATP = glycyl-tRNA(Gly) + AMP + diphosphate. Catalyzes the attachment of glycine to tRNA(Gly). The polypeptide is Glycine--tRNA ligase (Mycoplasma capricolum subsp. capricolum (strain California kid / ATCC 27343 / NCTC 10154)).